The chain runs to 479 residues: Calcium/calmodulin-dependent protein kinase type II delta chain (479 aa).

Positions 14–272 (YQLFEELGKG…ASEALKHPWI (259 aa)) constitute a Protein kinase domain. Residues 20 to 28 (LGKGAFSVV) and Lys43 each bind ATP. Asp136 acts as the Proton acceptor in catalysis. Thr287 carries the phosphothreonine modification. Residues Ser315 and Ser319 each carry the phosphoserine modification. Residue Thr337 is modified to Phosphothreonine.

Belongs to the protein kinase superfamily. CAMK Ser/Thr protein kinase family. CaMK subfamily. CAMK2 is composed of four different chains: alpha, beta, gamma, and delta. The different isoforms assemble into homo- or heteromultimeric holoenzymes composed of 8 to 12 subunits.

The catalysed reaction is L-seryl-[protein] + ATP = O-phospho-L-seryl-[protein] + ADP + H(+). It catalyses the reaction L-threonyl-[protein] + ATP = O-phospho-L-threonyl-[protein] + ADP + H(+). Its activity is regulated as follows. Autophosphorylation of CAMK2 plays an important role in the regulation of the kinase activity. Functionally, caM-kinase II (CAMK2) is a prominent kinase in the central nervous system. The chain is Calcium/calmodulin-dependent protein kinase type II delta chain (CAMK2D) from Gallus gallus (Chicken).